A 148-amino-acid chain; its full sequence is Small ribosomal subunit protein eS19G (148 aa).

This sequence belongs to the eukaryotic ribosomal protein eS19 family.

Its function is as follows. Elimination of the ALEP-1 gene from all somatic cells in its fully activate state may represent an alternative way to gene regulation. The chain is Small ribosomal subunit protein eS19G (RPS19G) from Ascaris suum (Pig roundworm).